An 860-amino-acid chain; its full sequence is MQEQYRPEDIESHVQRHWDEQKTFQVTEDAGKEKYYCLSMLPYPSGRLHMGHVRNYTIGDVISRYQRMLGKNVLQPIGWDAFGLPAEGAAVKNNTAPAPWTYANIDYMKNQLKLLGFGYDWSREIATCKPDYYRWEQWFFTKLYEKGLVYKKTSAVNWCPNDQTVLANEQVIDGCCWRCDSKVERKEIPQWFIKITDYADQLLNDLDRLEEWPEQVKTMQRNWIGRSEGVEITFHVADRDDTFAVYTTRPDTFMGVSYLAIAAAHPLAQQAATGNPALTQFIDECKNTKVAEADMATMEKKGMATGLYAIHPLNGERLPIWVANFVLMDYGTGAVMSVPAHDQRDWEFATRYDLPMKPVILTADGQAPDIRAAAMTDKGVLFNSGEFDGLDFSAAFDAVANRLIAAGVGERKVNYRLRDWGVSRQRYWGAPIPMMTLEDGSVIPTPEEQLPVILPEDVVMNGITSPIKADPSWAKTTVNGQPALRETDTFDTFMESSWYYARYTCPQFDQGMLDPQAANYWLPVDQYVGGIEHAIMHLMYFRFFHKLMRDAGLVDSDEPAKRLLCQGMVLADAFYYTGTNGERNWVSPVDVTVERDDKGRITQATDRDGRELVYAGMSKMSKSKNNGIDPQVMVERYGADTVRLFMMFASPAEMTLEWQESGVEGANRFLKRVWKLAFDHQQKGLASALDLTALNDDQKALRRDLHKTIAKVSDDIGRRQTFNTAIAAVMELMNKLTRAPQESEQDRALMQEALLAVVRMLYPFTPHVCFTLWRALGGAGDIDTAPWPVADDAAMVEDSKLIVVQVNGKVRGKITVAADASEEQVRALAAQEPLVAKYLDGVTVRKVIFVPGKLLNLVVG.

The 'HIGH' region signature appears at 42 to 52 (PYPSGRLHMGH). The short motif at 619 to 623 (KMSKS) is the 'KMSKS' region element. Lys-622 contributes to the ATP binding site.

Belongs to the class-I aminoacyl-tRNA synthetase family.

The protein localises to the cytoplasm. The catalysed reaction is tRNA(Leu) + L-leucine + ATP = L-leucyl-tRNA(Leu) + AMP + diphosphate. The chain is Leucine--tRNA ligase from Edwardsiella ictaluri (strain 93-146).